A 503-amino-acid chain; its full sequence is V-type proton ATPase subunit B (503 aa).

Arginine 378 is a binding site for ATP. 4 positions are modified to phosphoserine: serine 491, serine 492, serine 502, and serine 503.

It belongs to the ATPase alpha/beta chains family. In terms of assembly, V-ATPase is a heteromultimeric enzyme composed of a peripheral catalytic V1 complex (components A to H) attached to an integral membrane V0 proton pore complex (components: a, c, c', c'', d, e, f and VOA1). Interacts with rav1.

Its subcellular location is the vacuole membrane. Functionally, non-catalytic subunit of the V1 complex of vacuolar(H+)-ATPase (V-ATPase), a multisubunit enzyme composed of a peripheral complex (V1) that hydrolyzes ATP and a membrane integral complex (V0) that translocates protons. V-ATPase is responsible for acidifying and maintaining the pH of intracellular compartments. The polypeptide is V-type proton ATPase subunit B (Schizosaccharomyces pombe (strain 972 / ATCC 24843) (Fission yeast)).